Consider the following 160-residue polypeptide: Putative pre-16S rRNA nuclease (160 aa).

The protein belongs to the YqgF nuclease family.

It localises to the cytoplasm. Functionally, could be a nuclease involved in processing of the 5'-end of pre-16S rRNA. The chain is Putative pre-16S rRNA nuclease from Chelativorans sp. (strain BNC1).